Here is a 512-residue protein sequence, read N- to C-terminus: MPFGCVTLGDKKNYNQPSEVTDRYDLGQVIKTEEFCEIFRAKDKTTGKLHTCKKFQKRDGRKVRKAAKNEIGILKMVKHPNILQLVDVFVTRKEYFIFLELATGREVFDWILDQGYYSERDTSNVVRQVLEAVAYLHSLKIVHRNLKLENLVYYNRLKNSKIVISDFHLAKLENGLIKEPCGTPEYLAPEVVGRQRYGRPVDCWAIGVIMYILLSGNPPFYEEVEEDDYENHDKNLFRKILAGDYEFDSPYWDDISQAAKDLVTRLMEVEQDQRITAEEAISHEWISGNAASDKNIKDGVCAQIEKNFARAKWKKAVRVTTLMKRLRAPEQSGTAATQSASDAATPGAAGGAIAAAAAAAAAGGAASASGASATAATEGGAGCAAKSDDIASADRSATPATDGSATPATDGSVTPATDGSITPATDGSVTPATDRSATPATDGRATPATEESTVPATQSSALPAAKAAATPEPAVAQPDSTALEGATGQAPPSSKGEEATGCAQESQRVETS.

The 263-residue stretch at 24–286 (YDLGQVIKTE…AEEAISHEWI (263 aa)) folds into the Protein kinase domain. A disordered region spans residues 328 to 347 (APEQSGTAATQSASDAATPG). Residues 332–347 (SGTAATQSASDAATPG) are compositionally biased toward low complexity. S392 carries the phosphoserine modification. The interval 393 to 512 (ADRSATPATD…AQESQRVETS (120 aa)) is disordered. A compositionally biased stretch (polar residues) spans 398-439 (TPATDGSATPATDGSVTPATDGSITPATDGSVTPATDRSATP). T446 is modified (phosphothreonine). The span at 449 to 460 (TEESTVPATQSS) shows a compositional bias: polar residues. The segment covering 461 to 478 (ALPAAKAAATPEPAVAQP) has biased composition (low complexity). T470 carries the post-translational modification Phosphothreonine.

It belongs to the protein kinase superfamily. CAMK Ser/Thr protein kinase family. As to quaternary structure, interacts with calmodulin, in the presence of calcium. Ca(2+) serves as cofactor.

It is found in the cell membrane. It localises to the cytoplasmic vesicle membrane. Functionally, does not appear to have detectable kinase activity. The polypeptide is CaM kinase-like vesicle-associated protein (Camkv) (Mus musculus (Mouse)).